We begin with the raw amino-acid sequence, 468 residues long: ATP synthase subunit beta (468 aa).

Residue 155–162 coordinates ATP; the sequence is GGAGVGKT.

Belongs to the ATPase alpha/beta chains family. In terms of assembly, F-type ATPases have 2 components, CF(1) - the catalytic core - and CF(0) - the membrane proton channel. CF(1) has five subunits: alpha(3), beta(3), gamma(1), delta(1), epsilon(1). CF(0) has three main subunits: a(1), b(2) and c(9-12). The alpha and beta chains form an alternating ring which encloses part of the gamma chain. CF(1) is attached to CF(0) by a central stalk formed by the gamma and epsilon chains, while a peripheral stalk is formed by the delta and b chains.

It is found in the cell membrane. It catalyses the reaction ATP + H2O + 4 H(+)(in) = ADP + phosphate + 5 H(+)(out). In terms of biological role, produces ATP from ADP in the presence of a proton gradient across the membrane. The catalytic sites are hosted primarily by the beta subunits. The protein is ATP synthase subunit beta of Streptococcus agalactiae serotype Ia (strain ATCC 27591 / A909 / CDC SS700).